Reading from the N-terminus, the 131-residue chain is MSMSDPIADMLTRIRNGQQAQKASVTMPSSKVKVAIAKVLQDEGYIEGFSVREGEGKAVLDVALKYYAGRPVIERIERVSRPGLRVYKGTDDLPRVMNGLGVAIVSTPKGVMTDRAARASHVGGEVICLVA.

Belongs to the universal ribosomal protein uS8 family. Part of the 30S ribosomal subunit. Contacts proteins S5 and S12.

One of the primary rRNA binding proteins, it binds directly to 16S rRNA central domain where it helps coordinate assembly of the platform of the 30S subunit. The protein is Small ribosomal subunit protein uS8 of Azoarcus sp. (strain BH72).